A 178-amino-acid polypeptide reads, in one-letter code: Nicotinamide-nucleotide adenylyltransferase (178 aa).

The protein belongs to the archaeal NMN adenylyltransferase family.

It is found in the cytoplasm. It carries out the reaction beta-nicotinamide D-ribonucleotide + ATP + H(+) = diphosphate + NAD(+). The protein operates within cofactor biosynthesis; NAD(+) biosynthesis; NAD(+) from nicotinamide D-ribonucleotide: step 1/1. The protein is Nicotinamide-nucleotide adenylyltransferase of Caldivirga maquilingensis (strain ATCC 700844 / DSM 13496 / JCM 10307 / IC-167).